Consider the following 722-residue polypeptide: D-(-)-3-hydroxybutyrate oligomer hydrolase (722 aa).

Polar residues predominate over residues 1 to 11 (MQQRHLSQSAH). Residues 1 to 20 (MQQRHLSQSAHSHGHGTRRA) form a disordered region. A signal peptide spans 1–36 (MQQRHLSQSAHSHGHGTRRAHRRNTIAIAVATLAVA). S327 serves as the catalytic Charge relay system. The disordered stretch occupies residues 671 to 697 (PPSQVVRTTPRGGADTDTVGPRIQPSN).

It belongs to the D-(-)-3-hydroxybutyrate oligomer hydrolase family.

The protein resides in the secreted. The enzyme catalyses (3R)-hydroxybutanoate dimer + H2O = 2 (R)-3-hydroxybutanoate + H(+). It participates in lipid metabolism; butanoate metabolism. In terms of biological role, participates in the degradation of poly-3-hydroxybutyrate (PHB). It works downstream of poly(3-hydroxybutyrate) depolymerase, hydrolyzing D(-)-3-hydroxybutyrate oligomers of various length (3HB-oligomers) into 3HB-monomers. The sequence is that of D-(-)-3-hydroxybutyrate oligomer hydrolase from Cupriavidus metallidurans (strain ATCC 43123 / DSM 2839 / NBRC 102507 / CH34) (Ralstonia metallidurans).